The chain runs to 305 residues: Oxygen-dependent coproporphyrinogen-III oxidase (305 aa).

S94 is a binding site for substrate. A divalent metal cation contacts are provided by H98 and H108. Residue H108 is the Proton donor of the active site. 110–112 (NVR) is a substrate binding site. H147 and H177 together coordinate a divalent metal cation. Positions 242–277 (YVEFNLVYDRGTLFGLQTGGRTESILMSMPPLVRWE) are important for dimerization. 260–262 (GGR) provides a ligand contact to substrate.

This sequence belongs to the aerobic coproporphyrinogen-III oxidase family. In terms of assembly, homodimer. It depends on a divalent metal cation as a cofactor.

Its subcellular location is the cytoplasm. The catalysed reaction is coproporphyrinogen III + O2 + 2 H(+) = protoporphyrinogen IX + 2 CO2 + 2 H2O. It participates in porphyrin-containing compound metabolism; protoporphyrin-IX biosynthesis; protoporphyrinogen-IX from coproporphyrinogen-III (O2 route): step 1/1. In terms of biological role, involved in the heme biosynthesis. Catalyzes the aerobic oxidative decarboxylation of propionate groups of rings A and B of coproporphyrinogen-III to yield the vinyl groups in protoporphyrinogen-IX. The protein is Oxygen-dependent coproporphyrinogen-III oxidase of Shewanella denitrificans (strain OS217 / ATCC BAA-1090 / DSM 15013).